Here is a 208-residue protein sequence, read N- to C-terminus: Large ribosomal subunit protein bL25 (208 aa).

A compositionally biased stretch (low complexity) spans Pro-186–Ala-201. A disordered region spans residues Pro-186–Ala-208.

The protein belongs to the bacterial ribosomal protein bL25 family. CTC subfamily. In terms of assembly, part of the 50S ribosomal subunit; part of the 5S rRNA/L5/L18/L25 subcomplex. Contacts the 5S rRNA. Binds to the 5S rRNA independently of L5 and L18.

In terms of biological role, this is one of the proteins that binds to the 5S RNA in the ribosome where it forms part of the central protuberance. This is Large ribosomal subunit protein bL25 from Ralstonia pickettii (strain 12J).